Consider the following 601-residue polypeptide: tRNA 5-methylaminomethyl-2-thiouridine biosynthesis bifunctional protein MnmC (601 aa).

Residues 1-237 are tRNA (mnm(5)s(2)U34)-methyltransferase; that stretch reads MSDPTASPLI…KKQRLEAVAP (237 aa). Positions 252–601 are FAD-dependent cmnm(5)s(2)U34 oxidoreductase; the sequence is IGGGIAGAAM…FSSRVATGAV (350 aa).

The protein in the N-terminal section; belongs to the methyltransferase superfamily. tRNA (mnm(5)s(2)U34)-methyltransferase family. This sequence in the C-terminal section; belongs to the DAO family. Requires FAD as cofactor.

Its subcellular location is the cytoplasm. The enzyme catalyses 5-aminomethyl-2-thiouridine(34) in tRNA + S-adenosyl-L-methionine = 5-methylaminomethyl-2-thiouridine(34) in tRNA + S-adenosyl-L-homocysteine + H(+). Functionally, catalyzes the last two steps in the biosynthesis of 5-methylaminomethyl-2-thiouridine (mnm(5)s(2)U) at the wobble position (U34) in tRNA. Catalyzes the FAD-dependent demodification of cmnm(5)s(2)U34 to nm(5)s(2)U34, followed by the transfer of a methyl group from S-adenosyl-L-methionine to nm(5)s(2)U34, to form mnm(5)s(2)U34. This is tRNA 5-methylaminomethyl-2-thiouridine biosynthesis bifunctional protein MnmC from Caulobacter sp. (strain K31).